Here is a 6077-residue protein sequence, read N- to C-terminus: Nonribosomal peptide synthetase nlsA (6077 aa).

Residues 417-618 are adenylation 1; that stretch reads VFAYAPLIHG…LGRKDSQIKL (202 aa). Residues 751–827 enclose the Carrier 1 domain; that stretch reads HSEVTVEDRL…DLVTRVQEIK (77 aa). S788 carries the O-(pantetheine 4'-phosphoryl)serine modification. Condensation regions lie at residues 842-1267 and 1309-1737; these read LSPI…GKRL and EDIY…KQRI. Adenylation regions lie at residues 1757 to 2149 and 2755 to 3157; these read QEKM…YLGE and DRVI…QVKL. The 77-residue stretch at 3297 to 3373 folds into the Carrier 2 domain; sequence AVERAAESTL…DMAKCCDDTE (77 aa). S3334 is modified (O-(pantetheine 4'-phosphoryl)serine). The segment at 3524-3779 is condensation 3; it reads DSRYRQCLYK…LLSVPRDSLM (256 aa). Residues 3816–4213 are adenylation 4; the sequence is ENAIMHPQAT…LGRKDHQVKL (398 aa). The region spanning 4361-4437 is the Carrier 3 domain; it reads REGDATPAII…ELAVSCGTKP (77 aa). S4398 bears the O-(pantetheine 4'-phosphoryl)serine mark. Condensation regions lie at residues 4451 to 4869 and 4916 to 5260; these read PLSP…RVLE and VEDI…EDKT. The 77-residue stretch at 5334–5410 folds into the Carrier 4 domain; sequence RAPNDSEKQL…NMMALINDRK (77 aa). S5371 is subject to O-(pantetheine 4'-phosphoryl)serine. The segment at 5476–5885 is condensation 6; it reads DVLPVTDFQA…SLVANPNVAL (410 aa). The region spanning 5921–6004 is the Carrier 5 domain; the sequence is SEILVHSDLI…GHMAVLALNM (84 aa). Residues 6013–6027 show a composition bias toward low complexity; it reads DSDAAPAPAYAPVDA. The segment at 6013-6047 is disordered; sequence DSDAAPAPAYAPVDARASRNVSTSRQQQEGLPLPA. Positions 6031 to 6041 are enriched in polar residues; it reads RNVSTSRQQQE.

The protein belongs to the NRP synthetase family.

It functions in the pathway secondary metabolite biosynthesis. Nonribosomal peptide synthetase involved in the synthesis of nidulanin A and derived compounds. Nidulanin A is a tetracyclopeptide with the sequence L-Phe-L-Kyn-L-Val-D-Val and an isoprene unit N-linked to the amino group of L-kynurenine. The NRPS nlsA is responsible of the synthesis of the cyclopeptide and the prenyltransferase nptA adds the isoprene unit on the L-kynurenine residue of nidulanin A. Further modifications lead to additional oxygenated related compounds. The chain is Nonribosomal peptide synthetase nlsA from Emericella nidulans (strain FGSC A4 / ATCC 38163 / CBS 112.46 / NRRL 194 / M139) (Aspergillus nidulans).